Consider the following 109-residue polypeptide: uncharacterized protein (109 aa).

The chain crosses the membrane as a helical span at residues 75 to 95 (MALFHTVFILWPHFCGILWTV).

It is found in the membrane. This is an uncharacterized protein from Saccharomyces cerevisiae (strain ATCC 204508 / S288c) (Baker's yeast).